The chain runs to 367 residues: uncharacterized protein (367 aa).

Residues 8–28 form a helical membrane-spanning segment; the sequence is VLIGTFVLAAILAVFGFIYWL.

It localises to the membrane. This is an uncharacterized protein from Bradyrhizobium diazoefficiens (strain JCM 10833 / BCRC 13528 / IAM 13628 / NBRC 14792 / USDA 110).